A 360-amino-acid polypeptide reads, in one-letter code: Peptide chain release factor 1 (360 aa).

Gln-235 is subject to N5-methylglutamine. Basic and acidic residues predominate over residues 285–295 (RQAAEQTDMRR). Positions 285–309 (RQAAEQTDMRRNLLGSGDRSDKIRT) are disordered.

It belongs to the prokaryotic/mitochondrial release factor family. Methylated by PrmC. Methylation increases the termination efficiency of RF1.

The protein localises to the cytoplasm. Peptide chain release factor 1 directs the termination of translation in response to the peptide chain termination codons UAG and UAA. In Haemophilus influenzae (strain ATCC 51907 / DSM 11121 / KW20 / Rd), this protein is Peptide chain release factor 1 (prfA).